Here is a 470-residue protein sequence, read N- to C-terminus: 6-phospho-beta-galactosidase 1 (470 aa).

D-galactose 6-phosphate is bound by residues glutamine 23, histidine 120, asparagine 163, glutamate 164, and asparagine 300. The Proton donor role is filled by glutamate 164. Catalysis depends on glutamate 378, which acts as the Nucleophile. D-galactose 6-phosphate-binding residues include serine 434, tryptophan 435, lysine 441, and tyrosine 443.

It belongs to the glycosyl hydrolase 1 family.

It carries out the reaction a 6-phospho-beta-D-galactoside + H2O = D-galactose 6-phosphate + an alcohol. It participates in carbohydrate metabolism; lactose degradation; D-galactose 6-phosphate and beta-D-glucose from lactose 6-phosphate: step 1/1. In Streptococcus pneumoniae serotype 4 (strain ATCC BAA-334 / TIGR4), this protein is 6-phospho-beta-galactosidase 1.